Here is a 159-residue protein sequence, read N- to C-terminus: 3-dehydroquinate dehydratase (159 aa).

Residue Tyr-22 is the Proton acceptor of the active site. Residues Asn-73, His-79, and Asp-86 each coordinate substrate. The active-site Proton donor is the His-99. Substrate is bound by residues 100-101 (IS) and Arg-110.

It belongs to the type-II 3-dehydroquinase family. As to quaternary structure, homododecamer.

The catalysed reaction is 3-dehydroquinate = 3-dehydroshikimate + H2O. It participates in metabolic intermediate biosynthesis; chorismate biosynthesis; chorismate from D-erythrose 4-phosphate and phosphoenolpyruvate: step 3/7. Its function is as follows. Catalyzes a trans-dehydration via an enolate intermediate. The protein is 3-dehydroquinate dehydratase of Campylobacter jejuni subsp. doylei (strain ATCC BAA-1458 / RM4099 / 269.97).